Here is a 617-residue protein sequence, read N- to C-terminus: UvrABC system protein C (617 aa).

The 79-residue stretch at 22–100 (KLPGVYRFFD…IKALSPKYNI (79 aa)) folds into the GIY-YIG domain. Residues 209–244 (DELTRTLQHKMQTAAANLQFEEAARYRDQIQALGII) form the UVR domain.

It belongs to the UvrC family. In terms of assembly, interacts with UvrB in an incision complex.

It is found in the cytoplasm. Functionally, the UvrABC repair system catalyzes the recognition and processing of DNA lesions. UvrC both incises the 5' and 3' sides of the lesion. The N-terminal half is responsible for the 3' incision and the C-terminal half is responsible for the 5' incision. The protein is UvrABC system protein C of Neisseria gonorrhoeae (strain ATCC 700825 / FA 1090).